An 87-amino-acid chain; its full sequence is HssA/B-like protein 18 (87 aa).

The protein belongs to the hssA/B family.

In Dictyostelium discoideum (Social amoeba), this protein is HssA/B-like protein 18 (hssl18).